A 542-amino-acid polypeptide reads, in one-letter code: CTP synthase (542 aa).

Residues 1–265 (MTRYVFITGG…DREILAHFQM (265 aa)) form an amidoligase domain region. Serine 13 is a CTP binding site. Residue serine 13 participates in UTP binding. ATP contacts are provided by residues 14-19 (SLGKGL) and aspartate 71. Positions 71 and 139 each coordinate Mg(2+). CTP contacts are provided by residues 146-148 (DIE), 186-191 (KTKPTQ), and lysine 222. UTP is bound by residues 186–191 (KTKPTQ) and lysine 222. Position 238–240 (238–240 (RDV)) interacts with ATP. The Glutamine amidotransferase type-1 domain occupies 291–541 (TIAIVGKYTG…IAAAIEQSRL (251 aa)). L-glutamine is bound at residue glycine 353. The active-site Nucleophile; for glutamine hydrolysis is the cysteine 380. L-glutamine is bound by residues 381–384 (FGMQ), glutamate 404, and arginine 469. Residues histidine 514 and glutamate 516 contribute to the active site.

The protein belongs to the CTP synthase family. As to quaternary structure, homotetramer.

The enzyme catalyses UTP + L-glutamine + ATP + H2O = CTP + L-glutamate + ADP + phosphate + 2 H(+). It carries out the reaction L-glutamine + H2O = L-glutamate + NH4(+). The catalysed reaction is UTP + NH4(+) + ATP = CTP + ADP + phosphate + 2 H(+). It functions in the pathway pyrimidine metabolism; CTP biosynthesis via de novo pathway; CTP from UDP: step 2/2. Its activity is regulated as follows. Allosterically activated by GTP, when glutamine is the substrate; GTP has no effect on the reaction when ammonia is the substrate. The allosteric effector GTP functions by stabilizing the protein conformation that binds the tetrahedral intermediate(s) formed during glutamine hydrolysis. Inhibited by the product CTP, via allosteric rather than competitive inhibition. Functionally, catalyzes the ATP-dependent amination of UTP to CTP with either L-glutamine or ammonia as the source of nitrogen. Regulates intracellular CTP levels through interactions with the four ribonucleotide triphosphates. The protein is CTP synthase of Methylorubrum populi (strain ATCC BAA-705 / NCIMB 13946 / BJ001) (Methylobacterium populi).